Reading from the N-terminus, the 136-residue chain is Translation initiation factor 5A (136 aa).

Hypusine is present on Lys37.

This sequence belongs to the eIF-5A family.

Its subcellular location is the cytoplasm. Functionally, functions by promoting the formation of the first peptide bond. The sequence is that of Translation initiation factor 5A (eIF5A) from Thermococcus gammatolerans (strain DSM 15229 / JCM 11827 / EJ3).